The chain runs to 339 residues: MIGKIETLWDEIDNLNVNNSKELETLRIRFLGKKGEIASLMSGFRNVEANQKREIGQKLNSLKVKIQTKIDQLKETLGCQDLSENLIDLTRTAYPYRVGTRHPISIVQKRICNIFFKLGFSIAEGPEIEDDWHVFSALNFAFDHPARDMQDTFFIKYDKNILLRTHTSSVQIRTMEKTQPPIRILCPGRVYRNEAISARAHCFFHQVEAFYINRNVSFADLRQVLVFFAKEMFDSGINTRLRPSFFPFTEPSAEMDIMCNLCRGKGCSFCKFTGWVEILGCGMIDPNVLDNCNIDSKTYSGYALGMGVERITSLKYQVKDLRLFSENDIRFLRQFEMAV.

Glutamate 250 contacts Mg(2+).

The protein belongs to the class-II aminoacyl-tRNA synthetase family. Phe-tRNA synthetase alpha subunit type 1 subfamily. In terms of assembly, tetramer of two alpha and two beta subunits. It depends on Mg(2+) as a cofactor.

The protein resides in the cytoplasm. The enzyme catalyses tRNA(Phe) + L-phenylalanine + ATP = L-phenylalanyl-tRNA(Phe) + AMP + diphosphate + H(+). This is Phenylalanine--tRNA ligase alpha subunit from Azobacteroides pseudotrichonymphae genomovar. CFP2.